The following is a 211-amino-acid chain: Ion-translocating oxidoreductase complex subunit G (211 aa).

Residues 9-29 (GLTLAIFACATTGLVAMTQYL) form a helical membrane-spanning segment. At threonine 175 the chain carries FMN phosphoryl threonine.

The protein belongs to the RnfG family. The complex is composed of six subunits: RnfA, RnfB, RnfC, RnfD, RnfE and RnfG. It depends on FMN as a cofactor.

It is found in the cell inner membrane. Functionally, part of a membrane-bound complex that couples electron transfer with translocation of ions across the membrane. The protein is Ion-translocating oxidoreductase complex subunit G of Vibrio vulnificus (strain YJ016).